The sequence spans 225 residues: 7-cyano-7-deazaguanine synthase (225 aa).

10–20 (VSGGLDSTTVI) contributes to the ATP binding site. The Zn(2+) site is built by C189, C199, C202, and C205.

It belongs to the QueC family. Zn(2+) serves as cofactor.

It catalyses the reaction 7-carboxy-7-deazaguanine + NH4(+) + ATP = 7-cyano-7-deazaguanine + ADP + phosphate + H2O + H(+). It functions in the pathway purine metabolism; 7-cyano-7-deazaguanine biosynthesis. In terms of biological role, catalyzes the ATP-dependent conversion of 7-carboxy-7-deazaguanine (CDG) to 7-cyano-7-deazaguanine (preQ(0)). The chain is 7-cyano-7-deazaguanine synthase from Cellvibrio japonicus (strain Ueda107) (Pseudomonas fluorescens subsp. cellulosa).